Here is a 155-residue protein sequence, read N- to C-terminus: Short-chain-enoyl-CoA hydratase (155 aa).

This sequence belongs to the enoyl-CoA hydratase/isomerase family.

The catalysed reaction is a short-chain (3S)-3-hydroxyacyl-CoA = a short-chain (2E)-enoyl-CoA + H2O. It participates in lipid metabolism; butanoate metabolism. The protein is Short-chain-enoyl-CoA hydratase (crt) of Clostridioides difficile (Peptoclostridium difficile).